Reading from the N-terminus, the 203-residue chain is Thymidylate kinase (203 aa).

10 to 17 (GIDGAGKS) is a binding site for ATP.

This sequence belongs to the thymidylate kinase family.

The enzyme catalyses dTMP + ATP = dTDP + ADP. Functionally, phosphorylation of dTMP to form dTDP in both de novo and salvage pathways of dTTP synthesis. This Cupriavidus necator (strain ATCC 17699 / DSM 428 / KCTC 22496 / NCIMB 10442 / H16 / Stanier 337) (Ralstonia eutropha) protein is Thymidylate kinase.